The primary structure comprises 578 residues: NADPH oxidase 4 (578 aa).

Residues 1–16 are Cytoplasmic-facing; sequence MAVSWRSWLANEGVKH. A helical membrane pass occupies residues 17 to 37; sequence LCLLIWLSLNVLLFWKTFLLY. Residues 38-62 lie on the Extracellular side of the membrane; sequence NQGPEYYYIHQMLGLGLCLSRASAS. The 246-residue stretch at 58 to 303 folds into the Ferric oxidoreductase domain; it reads RASASVLNLN…YCAERLYRCI (246 aa). The helical transmembrane segment at 63-83 threads the bilayer; the sequence is VLNLNCSLILLPMCRTVLAYL. The Cytoplasmic portion of the chain corresponds to 84–104; sequence RGSQKVPSRRTRRLLDKSKTL. The chain crosses the membrane as a helical span at residues 105–125; it reads HITCGVTICIFSGVHVAAHLV. The Extracellular portion of the chain corresponds to 126–154; the sequence is NALNFSVNYSEDFLELNAARYQNEDPRKL. Residue Asn133 is glycosylated (N-linked (GlcNAc...) asparagine). The chain crosses the membrane as a helical span at residues 155 to 175; that stretch reads LFTTIPGLTGVCMVVVLFLMV. Residues 176-188 lie on the Cytoplasmic side of the membrane; the sequence is TASTYAIRVSNYD. A helical transmembrane segment spans residues 189–209; it reads IFWYTHNLFFVFYMLLLLHVS. Residues 210 to 424 lie on the Extracellular side of the membrane; the sequence is GGLLKYQTNV…SPFEESLNYE (215 aa). Positions 218 to 273 are E-loop; essential for H2O2 generating catalytic activity; that stretch reads NVDTHPPGCISLNQTSSQNMSIPDYVSEHFHGSLPRGFSKLEDRYQKTLVKICLEE. An N-linked (GlcNAc...) asparagine glycan is attached at Asn230. The tract at residues 248-575 is mediates interaction with TLR4; it reads HGSLPRGFSK…YGTKFEYNKE (328 aa). In terms of domain architecture, FAD-binding FR-type spans 304–419; sequence RSNKPVTIIS…DGPFGSPFEE (116 aa). The helical transmembrane segment at 425 to 445 threads the bilayer; that stretch reads VSLCVAGGIGVTPFASILNTL. Residues 446–578 are Cytoplasmic-facing; it reads LDDWKPYKLR…KFEYNKESFS (133 aa).

Interacts with, relocalizes and stabilizes CYBA/p22phox. Interacts with TLR4. Interacts with protein disulfide isomerase. Interacts with PPP1R15A. Interacts with LRRC8A; this interaction prevents the ubiquitin-mediated degradation of LRRC8A. Heme is required as a cofactor. N-glycosylation is required for the function. EXpressed in brain, in all layers of the cerebellum, in pyramidal cells of the Ammon horn and in Purkinje cells (at protein level). Expressed in osteoclasts, leukocytes, kidney, liver and lung.

Its subcellular location is the cytoplasm. The protein localises to the endoplasmic reticulum membrane. It localises to the cell membrane. The protein resides in the cell junction. It is found in the focal adhesion. Its subcellular location is the nucleus. The catalysed reaction is NADPH + 2 O2 = 2 superoxide + NADP(+) + H(+). The enzyme catalyses NADPH + O2 + H(+) = H2O2 + NADP(+). With respect to regulation, activated by insulin. Inhibited by diphenylene iodonium. Inhibited by plumbagin. Activated by phorbol 12-myristate 13-acetate (PMA). Its function is as follows. NADPH oxidase that catalyzes predominantly the reduction of oxygen to H2O2. Can also catalyze to a smaller extent, the reduction of oxygen to superoxide. May function as an oxygen sensor regulating the KCNK3/TASK-1 potassium channel and HIF1A activity. May regulate insulin signaling cascade. May play a role in apoptosis, bone resorption and lipolysaccharide-mediated activation of NFKB. May produce superoxide in the nucleus and play a role in regulating gene expression upon cell stimulation. Promotes ferroptosis, reactive oxygen species production and reduced glutathione (GSH) levels by activating NLRP3 inflammasome activation and cytokine release. The protein is NADPH oxidase 4 (Nox4) of Mus musculus (Mouse).